The primary structure comprises 236 residues: WUSCHEL-related homeobox 4 (236 aa).

Positions Ala88 to Gln152 form a DNA-binding region, homeobox; WUS-type. Residues Pro169–Asp188 are disordered. Residues Glu174 to Glu187 are compositionally biased toward basic and acidic residues.

Belongs to the WUS homeobox family.

The protein resides in the nucleus. In terms of biological role, transcription factor which may be involved in developmental processes. The sequence is that of WUSCHEL-related homeobox 4 (WOX4) from Oryza sativa subsp. indica (Rice).